We begin with the raw amino-acid sequence, 322 residues long: tRNA-dihydrouridine synthase B (322 aa).

FMN-binding positions include 16–18 and Gln70; that span reads PMA. Cys100 acts as the Proton donor in catalysis. FMN-binding positions include Lys139, 200–202, and 224–225; these read NGD and GR.

Belongs to the Dus family. DusB subfamily. The cofactor is FMN.

The enzyme catalyses a 5,6-dihydrouridine in tRNA + NAD(+) = a uridine in tRNA + NADH + H(+). It catalyses the reaction a 5,6-dihydrouridine in tRNA + NADP(+) = a uridine in tRNA + NADPH + H(+). Its function is as follows. Catalyzes the synthesis of 5,6-dihydrouridine (D), a modified base found in the D-loop of most tRNAs, via the reduction of the C5-C6 double bond in target uridines. This chain is tRNA-dihydrouridine synthase B, found in Vibrio vulnificus (strain CMCP6).